The primary structure comprises 671 residues: DNA ligase (671 aa).

NAD(+) contacts are provided by residues 32-36 (DAEYD), 81-82 (SL), and glutamate 113. Lysine 115 functions as the N6-AMP-lysine intermediate in the catalytic mechanism. Residues arginine 136, glutamate 173, lysine 290, and lysine 314 each coordinate NAD(+). Cysteine 408, cysteine 411, cysteine 426, and cysteine 432 together coordinate Zn(2+). Residues 593–671 (EIDSPFAGKT…EAEMIRLLGA (79 aa)) form the BRCT domain.

The protein belongs to the NAD-dependent DNA ligase family. LigA subfamily. Requires Mg(2+) as cofactor. It depends on Mn(2+) as a cofactor.

The catalysed reaction is NAD(+) + (deoxyribonucleotide)n-3'-hydroxyl + 5'-phospho-(deoxyribonucleotide)m = (deoxyribonucleotide)n+m + AMP + beta-nicotinamide D-nucleotide.. DNA ligase that catalyzes the formation of phosphodiester linkages between 5'-phosphoryl and 3'-hydroxyl groups in double-stranded DNA using NAD as a coenzyme and as the energy source for the reaction. It is essential for DNA replication and repair of damaged DNA. This Salmonella newport (strain SL254) protein is DNA ligase.